The following is a 195-amino-acid chain: Cysteine/O-acetylserine efflux protein (195 aa).

The Periplasmic portion of the chain corresponds to 1 to 9 (MTPMLLSAF). Residues 10-32 (WTYTLITALTPGPNNILALSAAT) form a helical membrane-spanning segment. The Cytoplasmic portion of the chain corresponds to 33 to 46 (AHGFRQSIRVLAGM). A helical membrane pass occupies residues 47–67 (SLGFLVVMLLCAGIAFSLAVI). The Periplasmic segment spans residues 68-69 (DP). A helical membrane pass occupies residues 70 to 90 (AIIHLLSWVGAAYILWLAWKI). The Cytoplasmic portion of the chain corresponds to 91–104 (ATSPAADEKVRPKP). Residues 105–125 (VGFWVSFGLQFVNVKIILYGI) form a helical membrane-spanning segment. Residues 126–141 (TALSTFVLPQTQALNW) lie on the Periplasmic side of the membrane. A helical membrane pass occupies residues 142–162 (VIGVSILLALIGTFGNVCWAL). Over 163 to 176 (AGHLFQRAFRHYGR) the chain is Cytoplasmic. The chain crosses the membrane as a helical span at residues 177 to 194 (QLNIILALLLVYCAVRIF). A topological domain (periplasmic) is located at residue Tyr-195.

This sequence belongs to the Rht family.

Its subcellular location is the cell inner membrane. The catalysed reaction is O-acetyl-L-serine(in) = O-acetyl-L-serine(out). It catalyses the reaction L-cysteine(in) = L-cysteine(out). In terms of biological role, exporter of O-acetylserine (OAS) and cysteine. In Salmonella paratyphi A (strain ATCC 9150 / SARB42), this protein is Cysteine/O-acetylserine efflux protein (eamB).